The chain runs to 467 residues: Glutamate--tRNA ligase (467 aa).

The 'HIGH' region signature appears at 9–19 (PSPTGFLHIGG). Residues 250–254 (KLSKR) carry the 'KMSKS' region motif. ATP is bound at residue K253.

It belongs to the class-I aminoacyl-tRNA synthetase family. Glutamate--tRNA ligase type 1 subfamily. Monomer.

The protein localises to the cytoplasm. It carries out the reaction tRNA(Glu) + L-glutamate + ATP = L-glutamyl-tRNA(Glu) + AMP + diphosphate. Functionally, catalyzes the attachment of glutamate to tRNA(Glu) in a two-step reaction: glutamate is first activated by ATP to form Glu-AMP and then transferred to the acceptor end of tRNA(Glu). The sequence is that of Glutamate--tRNA ligase from Mesomycoplasma hyopneumoniae (strain 7448) (Mycoplasma hyopneumoniae).